A 387-amino-acid polypeptide reads, in one-letter code: Palmitoyltransferase ZDHHC16A (387 aa).

The next 2 membrane-spanning stretches (helical) occupy residues 73–93 and 106–126; these read WFGM…VFIA and SPGW…MIVF. In terms of domain architecture, DHHC spans 150–200; sequence SVCKKCIIPKPARSHHCGICKTCILKMDHHCPWLNNCVGHFNHRYFFSFCL. C180 functions as the S-palmitoyl cysteine intermediate in the catalytic mechanism. 3 consecutive transmembrane segments (helical) span residues 198-218, 236-256, and 281-301; these read FCLF…HLFI, GVPV…GVAG, and VIYM…LTLW.

It belongs to the DHHC palmitoyltransferase family. As to expression, expressed in the central nervous system (CNS). Expressed in the developing forebrain, and especially in the telencephalon.

It localises to the endoplasmic reticulum membrane. The catalysed reaction is L-cysteinyl-[protein] + hexadecanoyl-CoA = S-hexadecanoyl-L-cysteinyl-[protein] + CoA. Its function is as follows. Palmitoyl acyltransferase that mediates palmitoylation of proteins and is required during embryonic heart development. Involved in the proliferation of neural stem cells by regulating the FGF/ERK pathway. Involved in the proliferation of neural stem cells by regulating the FGF/ERK pathway. In Danio rerio (Zebrafish), this protein is Palmitoyltransferase ZDHHC16A.